A 228-amino-acid chain; its full sequence is MNSQAPVITIDGPSGSGKGTVAGLLARELGWRLLDSGALYRLLAFNASNHGVDLTNEELLKALAAHLDVQFIAAEPGKLQQIILEGEDVSNVIRTETVGAGASMVASLPAVREALLQRQRAFRETPGLIADGRDMGTVVFPDAPLKVFLTASAEERARRRYLQLKGKGEDVSLSSLLDEIRARDERDTQRAVAPLKPAADAIQLDSTELSIEQVLHRIRSELAQRDLV.

Gly12–Thr20 provides a ligand contact to ATP.

It belongs to the cytidylate kinase family. Type 1 subfamily.

The protein localises to the cytoplasm. The catalysed reaction is CMP + ATP = CDP + ADP. It catalyses the reaction dCMP + ATP = dCDP + ADP. The polypeptide is Cytidylate kinase (Pseudomonas putida (strain W619)).